Consider the following 340-residue polypeptide: Histidinol-phosphate aminotransferase (340 aa).

At K204 the chain carries N6-(pyridoxal phosphate)lysine.

The protein belongs to the class-II pyridoxal-phosphate-dependent aminotransferase family. Histidinol-phosphate aminotransferase subfamily. Requires pyridoxal 5'-phosphate as cofactor.

The catalysed reaction is L-histidinol phosphate + 2-oxoglutarate = 3-(imidazol-4-yl)-2-oxopropyl phosphate + L-glutamate. It participates in amino-acid biosynthesis; L-histidine biosynthesis; L-histidine from 5-phospho-alpha-D-ribose 1-diphosphate: step 7/9. The sequence is that of Histidinol-phosphate aminotransferase from Thermococcus gammatolerans (strain DSM 15229 / JCM 11827 / EJ3).